Consider the following 250-residue polypeptide: Proteasome subunit alpha type-7 (250 aa).

It belongs to the peptidase T1A family. In terms of assembly, the 26S proteasome consists of a 20S proteasome core and two 19S regulatory subunits. The 20S proteasome core is composed of 28 subunits that are arranged in four stacked rings, resulting in a barrel-shaped structure. The two end rings are each formed by seven alpha subunits, and the two central rings are each formed by seven beta subunits. The catalytic chamber with the active sites is on the inside of the barrel.

It localises to the cytoplasm. It is found in the nucleus. Its function is as follows. The proteasome is a multicatalytic proteinase complex which is characterized by its ability to cleave peptides with Arg, Phe, Tyr, Leu, and Glu adjacent to the leaving group at neutral or slightly basic pH. The proteasome has an ATP-dependent proteolytic activity. The protein is Proteasome subunit alpha type-7 (psmA7) of Dictyostelium discoideum (Social amoeba).